The chain runs to 141 residues: Hemoglobin subunit alpha (141 aa).

A Globin domain is found at valine 1–arginine 141. Serine 3 carries the phosphoserine modification. Lysine 7 bears the N6-succinyllysine mark. The residue at position 8 (threonine 8) is a Phosphothreonine. N6-succinyllysine is present on lysine 11. An N6-acetyllysine; alternate modification is found at lysine 16. Residue lysine 16 is modified to N6-succinyllysine; alternate. Tyrosine 24 carries the post-translational modification Phosphotyrosine. Residue serine 35 is modified to Phosphoserine. N6-succinyllysine is present on lysine 40. A Phosphoserine modification is found at serine 49. Histidine 58 contributes to the O2 binding site. Histidine 87 contacts heme b. Serine 102 carries the phosphoserine modification. The residue at position 108 (threonine 108) is a Phosphothreonine. Position 124 is a phosphoserine (serine 124). A phosphothreonine mark is found at threonine 134 and threonine 137. The residue at position 138 (serine 138) is a Phosphoserine.

It belongs to the globin family. Heterotetramer of two alpha chains and two beta chains. Red blood cells.

In terms of biological role, involved in oxygen transport from the lung to the various peripheral tissues. Hemopressin acts as an antagonist peptide of the cannabinoid receptor CNR1. Hemopressin-binding efficiently blocks cannabinoid receptor CNR1 and subsequent signaling. In Ctenodactylus gundi (Northern gundi), this protein is Hemoglobin subunit alpha (HBA).